The sequence spans 506 residues: MAFLLFFVFVTAAVLCFVVPAFLLLCTSVQRRRDVGQGGGRDWQKKKKLRLPPGSMGWPYVGETLQLYSQDPNVFFASKQKRYGEIFKTNLLGCPCVMLASPEAARFVLVSQARLFKPTYPPSKERMIGPSALFFHQGEYHLRLRRLVQAALAPDSLRALVPDVDAAVAATLAAWSGGHVASTFHAMKKLSFDVGVVTIFGGRLGRRHREELRTNYSVVERGYNCFPNRFPGTLYHKAIQARKRLRAILSEIVAERRARGGGGDDLLGGLMRSRDDGTAGAVALLTDDQIADNVVGVLFAAQDTTASVLTWILKYLHDSPKLLEAVKAEQMAIYVANEGGKRPLTWTQTRSMTLTHQVILESLRMASIISFTFREAVADVEYKGFLIPKGWKVMPLFRNIHHNPDYFQDPQKFDPSRFKVAPRPSTFLPFGSGVHACPGNELAKLEMLVLVHRLVTAYRWEIVGASDEVEYSPFPVPRGGLNAKLWKQEAEEDMYMAMGTITAAGA.

Residues 3–23 (FLLFFVFVTAAVLCFVVPAFL) form a helical membrane-spanning segment. Position 437 (Cys437) interacts with heme.

This sequence belongs to the cytochrome P450 family. Heme is required as a cofactor. As to expression, in internodes and expanding leaves. Weak expression in seedlings.

It localises to the membrane. It catalyses the reaction 2-cis-(+)-abscisate + reduced [NADPH--hemoprotein reductase] + O2 = (+)-8'-hydroxyabscisate + oxidized [NADPH--hemoprotein reductase] + H2O + H(+). It participates in plant hormone degradation; abscisic acid degradation. Involved in the oxidative degradation of abscisic acid. This Oryza sativa subsp. indica (Rice) protein is Abscisic acid 8'-hydroxylase 2 (CYP707A6).